We begin with the raw amino-acid sequence, 267 residues long: Probable proteasome subunit beta type-2 (267 aa).

A propeptide spans 1–35 (MMGINERKGFDFEYYQRNLLLQEKGFPTPKATSTG) (removed in mature form). The Nucleophile role is filled by Thr-36.

This sequence belongs to the peptidase T1B family. As to quaternary structure, the 26S proteasome consists of a 20S proteasome core and two 19S regulatory subunits. The 20S proteasome core is composed of 28 subunits that are arranged in four stacked rings, resulting in a barrel-shaped structure. The two end rings are each formed by seven alpha subunits, and the two central rings are each formed by seven beta subunits. The catalytic chamber with the active sites is on the inside of the barrel.

The protein localises to the cytoplasm. It localises to the nucleus. The enzyme catalyses Cleavage of peptide bonds with very broad specificity.. In terms of biological role, the proteasome is a multicatalytic proteinase complex which is characterized by its ability to cleave peptides with Arg, Phe, Tyr, Leu, and Glu adjacent to the leaving group at neutral or slightly basic pH. The proteasome has an ATP-dependent proteolytic activity (Potential). The chain is Probable proteasome subunit beta type-2 (pup1) from Schizosaccharomyces pombe (strain 972 / ATCC 24843) (Fission yeast).